The sequence spans 371 residues: Peptide chain release factor 2 (371 aa).

Gln253 is modified (N5-methylglutamine).

This sequence belongs to the prokaryotic/mitochondrial release factor family. Methylated by PrmC. Methylation increases the termination efficiency of RF2.

Its subcellular location is the cytoplasm. Functionally, peptide chain release factor 2 directs the termination of translation in response to the peptide chain termination codons UGA and UAA. The polypeptide is Peptide chain release factor 2 (Mycobacterium sp. (strain KMS)).